Reading from the N-terminus, the 269-residue chain is MRSVPGPSPPCTRSLAHSCRAAARGPCGSARPRARSVSARAHSSEASDMARVQQNFNSAGVGLFFSLFGGNQSLALPHLAAPDIRHVDWRALKAAGFKGLVFDKDNTLSLPFALEVEPRLQPALAGCLEAFGGRAVLYSNSAGLQQYDPEGKEAAALEAALGIPVLRHADKKPGGGCAELEAHFGCPAPQLIMVGDRYLTDIAFGNRHGMLTVHVQPLTTSGEPFGVVMARRIEEFWVARWTSFGVHPPAHSLAPHDTLAAYVKDQPIA.

The transit peptide at 1–33 (MRSVPGPSPPCTRSLAHSCRAAARGPCGSARPR) directs the protein to the chloroplast. The segment at 25 to 46 (GPCGSARPRARSVSARAHSSEA) is disordered. Residues 29 to 46 (SARPRARSVSARAHSSEA) are compositionally biased toward low complexity. Positions 103–107 (DKDNT) match the Phosphoryl acceptor motif.

Belongs to the HAD-like hydrolase superfamily.

The protein localises to the plastid. It localises to the chloroplast. The enzyme catalyses a 1,2-diacyl-sn-glycero-3-phospho-(1'-sn-glycero-3'-phosphate) + H2O = a 1,2-diacyl-sn-glycero-3-phospho-(1'-sn-glycerol) + phosphate. Its pathway is phospholipid metabolism; phosphatidylglycerol biosynthesis; phosphatidylglycerol from CDP-diacylglycerol: step 2/2. Its function is as follows. Phosphatidylglycerophosphate phosphatase involved in the biosynthesis of phosphatidylglycerol (PG), a phosphoglycerolipid predominantly present in chloroplastic thylakoid membranes and which has important photosynthetic function. Required for thylakoid membranes development and chloroplast function. In Chlamydomonas reinhardtii (Chlamydomonas smithii), this protein is Phosphatidylglycerophosphate phosphatase 1, chloroplastic.